A 152-amino-acid polypeptide reads, in one-letter code: Transcriptional regulator MraZ (152 aa).

2 SpoVT-AbrB domains span residues 5-52 (ATLV…PLPE) and 81-124 (ASEC…DETT).

This sequence belongs to the MraZ family. As to quaternary structure, forms oligomers.

It localises to the cytoplasm. The protein resides in the nucleoid. In terms of biological role, negatively regulates its own expression and that of the subsequent genes in the proximal part of the division and cell wall (dcw) gene cluster. Acts by binding directly to DNA. May also regulate the expression of genes outside the dcw cluster. The sequence is that of Transcriptional regulator MraZ from Escherichia coli O127:H6 (strain E2348/69 / EPEC).